A 104-amino-acid polypeptide reads, in one-letter code: MYAVIRTGGKQYRVAPESILKVEKLEAEAGSTITFTDVLMVGGEGTLTVGAPLVAGATVTATVVAQDRLPKVIIFKKRRRQNSRRKNGHRQPVTVLRINAINAA.

Belongs to the bacterial ribosomal protein bL21 family. As to quaternary structure, part of the 50S ribosomal subunit. Contacts protein L20.

Its function is as follows. This protein binds to 23S rRNA in the presence of protein L20. The polypeptide is Large ribosomal subunit protein bL21 (Gluconobacter oxydans (strain 621H) (Gluconobacter suboxydans)).